Reading from the N-terminus, the 466-residue chain is Putative proline/betaine transporter (466 aa).

Transmembrane regions (helical) follow at residues 20 to 42 (VVAT…YTTA), 63 to 83 (FAAL…FGII), 91 to 111 (VVLT…GLLP), 116 to 136 (IGLW…FSTG), 164 to 184 (IGTL…TFFL), 191 to 211 (SFGW…GLYL), 239 to 259 (IIRF…FFNV), 285 to 305 (VLIT…GKLA), 313 to 332 (VFLI…FMLL), 337 to 354 (FVVI…LSTY), 377 to 397 (VTFN…ATWL), and 405 to 425 (LAPA…ITFL).

Belongs to the major facilitator superfamily. Metabolite:H+ Symporter (MHS) family (TC 2.A.1.6) family.

Its subcellular location is the cell membrane. In terms of biological role, may be a proton symporter involved in the uptake of osmolytes such as proline and glycine betaine. The polypeptide is Putative proline/betaine transporter (proP) (Staphylococcus aureus (strain MSSA476)).